A 349-amino-acid polypeptide reads, in one-letter code: Phosphoribosylformylglycinamidine cyclo-ligase (349 aa).

This sequence belongs to the AIR synthase family.

The protein resides in the cytoplasm. It carries out the reaction 2-formamido-N(1)-(5-O-phospho-beta-D-ribosyl)acetamidine + ATP = 5-amino-1-(5-phospho-beta-D-ribosyl)imidazole + ADP + phosphate + H(+). It participates in purine metabolism; IMP biosynthesis via de novo pathway; 5-amino-1-(5-phospho-D-ribosyl)imidazole from N(2)-formyl-N(1)-(5-phospho-D-ribosyl)glycinamide: step 2/2. This Lactobacillus delbrueckii subsp. bulgaricus (strain ATCC 11842 / DSM 20081 / BCRC 10696 / JCM 1002 / NBRC 13953 / NCIMB 11778 / NCTC 12712 / WDCM 00102 / Lb 14) protein is Phosphoribosylformylglycinamidine cyclo-ligase.